A 120-amino-acid polypeptide reads, in one-letter code: MKKLTKTHSHRQQKLASIINEALIEILRRGKMLDSRLFDCPLTITKVIVTTDLKIANCYFLPFNTKLTIDEIMDALNNSKNAIRNFITNKINMKFSPDIRFHYDHGFDNAIKVAHLLKDL.

It belongs to the RbfA family. Monomer. Binds 30S ribosomal subunits, but not 50S ribosomal subunits or 70S ribosomes.

The protein resides in the cytoplasm. Its function is as follows. One of several proteins that assist in the late maturation steps of the functional core of the 30S ribosomal subunit. Associates with free 30S ribosomal subunits (but not with 30S subunits that are part of 70S ribosomes or polysomes). Required for efficient processing of 16S rRNA. May interact with the 5'-terminal helix region of 16S rRNA. In Rickettsia peacockii (strain Rustic), this protein is Ribosome-binding factor A.